The sequence spans 103 residues: Putative membrane protein insertion efficiency factor (103 aa).

Belongs to the UPF0161 family.

The protein localises to the cell inner membrane. In terms of biological role, could be involved in insertion of integral membrane proteins into the membrane. This Chlamydia abortus (strain DSM 27085 / S26/3) (Chlamydophila abortus) protein is Putative membrane protein insertion efficiency factor.